We begin with the raw amino-acid sequence, 364 residues long: Geissoschizine synthase (364 aa).

Cysteine 51 contacts Zn(2+). Asparagine 52 serves as a coordination point for NADP(+). Residues histidine 73, glutamate 74, cysteine 104, cysteine 107, cysteine 110, cysteine 118, and cysteine 168 each coordinate Zn(2+). Leucine 194, glycine 196, leucine 197, serine 216, threonine 217, serine 218, lysine 221, arginine 261, valine 280, alanine 282, serine 304, threonine 306, and arginine 351 together coordinate NADP(+).

This sequence belongs to the zinc-containing alcohol dehydrogenase family. Class-III subfamily. In terms of assembly, homodimer. It depends on Zn(2+) as a cofactor. Expressed in leaf epidermis.

The catalysed reaction is (19E)-geissoschizine + NADP(+) = 4,21-dehydrogeissoschizine + NADPH. The protein operates within alkaloid biosynthesis. Component of the seco-iridoid and derivatives monoterpenoid indole alkaloids (MIAs, e.g. catharanthine, tabersonine, vincadifformine, vindoline, vincristine, quinine and strychnine) biosynthesis pathway. During the conversion of strictosidine aglycone to geissoschizine, catalyzes iminium reduction on 4,21-dehydrogeissoschizine to produce 19E-geissoschizine, precursor of catharanthine and tabersonine derivatives. May also trigger the production of reactive intermediate used by the HL1, HL2, HL3 and HL4 to form catharanthine, vincadifformine and tabersonine. The protein is Geissoschizine synthase of Catharanthus roseus (Madagascar periwinkle).